The sequence spans 203 residues: GTP cyclohydrolase-2 (203 aa).

49-53 (RIHSE) is a GTP binding site. Cys-54, Cys-65, and Cys-67 together coordinate Zn(2+). GTP is bound by residues Gln-70, 92–94 (EGR), and Thr-114. Asp-126 serves as the catalytic Proton acceptor. The active-site Nucleophile is the Arg-128. 2 residues coordinate GTP: Thr-149 and Lys-154.

This sequence belongs to the GTP cyclohydrolase II family. Requires Zn(2+) as cofactor.

The enzyme catalyses GTP + 4 H2O = 2,5-diamino-6-hydroxy-4-(5-phosphoribosylamino)-pyrimidine + formate + 2 phosphate + 3 H(+). It participates in cofactor biosynthesis; riboflavin biosynthesis; 5-amino-6-(D-ribitylamino)uracil from GTP: step 1/4. In terms of biological role, catalyzes the conversion of GTP to 2,5-diamino-6-ribosylamino-4(3H)-pyrimidinone 5'-phosphate (DARP), formate and pyrophosphate. The polypeptide is GTP cyclohydrolase-2 (Shewanella sp. (strain MR-4)).